A 416-amino-acid chain; its full sequence is MIHPDPTLFGHDPWWLILAKAVGVFVFLVLTVLAAILIERKVLGRMQMRFGPNRVGPKGLLQSLADGIKLALKEGITPAGVDKPVYLLAPVISVIPAFLAFAVIPMGGEVSVFGHRTALQLTDLAVAVLYILAVTSVGVYGIVLAGWASGSTYPLLGGLRSSAQVVSYEIAMALSFATVFLYAGTMSTSGIVAAQTSTWYVFLLLPSFLVYVTSMVGETNRAPFDLPEAEGELVGGFHTEYSSLKFAMFMLAEYVNMTTVSALATTMFLGGWHAPWPISLWEGANSGWWPLLWFTAKVWVFLFVYIWLRGTLPRLRYDQFMAIGWKMLIPVSLAWIMIVATAHSLRTTGHGGWASGLLIAGTVLTFGLAVILWRTMRFRADRTVPARTAADVFPIPPIPGRAGTARTPESRETTDA.

The next 9 helical transmembrane spans lie at 16-36 (LILAKAVGVFVFLVLTVLAAI), 84-104 (PVYLLAPVISVIPAFLAFAVI), 124-144 (LAVAVLYILAVTSVGVYGIVL), 165-185 (VVSYEIAMALSFATVFLYAGT), 197-217 (STWYVFLLLPSFLVYVTSMVG), 260-280 (VSALATTMFLGGWHAPWPISL), 288-308 (WWPLLWFTAKVWVFLFVYIWL), 320-340 (FMAIGWKMLIPVSLAWIMIVA), and 353-373 (WASGLLIAGTVLTFGLAVILW).

It belongs to the complex I subunit 1 family. In terms of assembly, NDH-1 is composed of 14 different subunits. Subunits NuoA, H, J, K, L, M, N constitute the membrane sector of the complex.

It localises to the cell membrane. The enzyme catalyses a quinone + NADH + 5 H(+)(in) = a quinol + NAD(+) + 4 H(+)(out). Functionally, NDH-1 shuttles electrons from NADH, via FMN and iron-sulfur (Fe-S) centers, to quinones in the respiratory chain. The immediate electron acceptor for the enzyme in this species is believed to be menaquinone. Couples the redox reaction to proton translocation (for every two electrons transferred, four hydrogen ions are translocated across the cytoplasmic membrane), and thus conserves the redox energy in a proton gradient. This subunit may bind ubiquinone. The polypeptide is NADH-quinone oxidoreductase subunit H (Mycobacterium sp. (strain KMS)).